We begin with the raw amino-acid sequence, 165 residues long: MKTPRLPIAIQQAVMRRLRENLAQANLKLDRHYPEPKLVYTQRGTSAGTAWLESYEIRLNPVLLLENIDTFIAEVVPHELAHLLVWKHFGRKAPHGKEWKWMMESVLGVPARRTHQFALQSVRRNTFPYHCQCQQNQLTVRRHNRVVRGEAVYRCVHCGEPLVAG.

The SprT-like domain occupies 22–163; sequence LAQANLKLDR…RCVHCGEPLV (142 aa). Histidine 78 lines the Zn(2+) pocket. The active site involves glutamate 79. Residue histidine 82 coordinates Zn(2+).

Belongs to the SprT family. It depends on Zn(2+) as a cofactor.

The protein resides in the cytoplasm. In Salmonella paratyphi C (strain RKS4594), this protein is Protein SprT.